The chain runs to 197 residues: dITP/XTP pyrophosphatase (197 aa).

Position 8-13 (8-13 (TKNKGK)) interacts with substrate. Residues Glu42 and Asp71 each coordinate Mg(2+). The Proton acceptor role is filled by Asp71. Substrate-binding positions include Ser72, 154-157 (FGYD), Lys177, and 182-183 (HR).

This sequence belongs to the HAM1 NTPase family. Homodimer. Mg(2+) is required as a cofactor.

It carries out the reaction XTP + H2O = XMP + diphosphate + H(+). The catalysed reaction is dITP + H2O = dIMP + diphosphate + H(+). The enzyme catalyses ITP + H2O = IMP + diphosphate + H(+). In terms of biological role, pyrophosphatase that catalyzes the hydrolysis of nucleoside triphosphates to their monophosphate derivatives, with a high preference for the non-canonical purine nucleotides XTP (xanthosine triphosphate), dITP (deoxyinosine triphosphate) and ITP. Seems to function as a house-cleaning enzyme that removes non-canonical purine nucleotides from the nucleotide pool, thus preventing their incorporation into DNA/RNA and avoiding chromosomal lesions. This chain is dITP/XTP pyrophosphatase, found in Oceanobacillus iheyensis (strain DSM 14371 / CIP 107618 / JCM 11309 / KCTC 3954 / HTE831).